We begin with the raw amino-acid sequence, 740 residues long: Gramillins biosynthetic cluster protein FGSG_11657 (740 aa).

Disordered regions lie at residues 353–391, 414–434, 514–535, and 656–686; these read QADS…SSIP, SKLS…DAAS, PKEQ…GSSD, and EHEG…PQGD. Over residues 656-667 the composition is skewed to basic and acidic residues; the sequence is EHEGEGRADTNR. A compositionally biased stretch (polar residues) spans 668–682; sequence HVSTQSNMPTEQSLL.

It functions in the pathway mycotoxin biosynthesis. Part of the gene cluster that mediates the biosynthesis of gramillins A and B, bicyclic lipopeptides that induce cell death in maize leaves but not in wheat leaves. The nonribosomal peptide synthetase GRA1 incorporates respectively a glutamic adic (Glu), a leucine (Leu), a serine (Ser), a hydroxyglutamine (HOGln), a 2-amino decanoic acid, and 2 cysteins (CysB and CysA). The biosynthesis of 2-amino decanoic acid incorporated in gramillins could be initiated by a fatty acid synthase composed of the alpha and beta subunits FGSG_00036 and FGSG_11656. The cytochrome P450 monooxygenase FGSG_15680 could hydroxylate the fatty acid chain. Subsequent oxidation to the ketone by the oxidoreductase FGSG_00048 and transamination by aminotransferase FGSG_00049 could form 2-amino-decanoic acid. On the other hand, FGSG_15680 could also be responsible for the HO-modified glutamine at the gamma-position. Whether hydroxylation occurs on the fully assembled product or on the Gln residue prior to assembly into the gramillins requires further proof. The thioredoxin FGSG_00043 could also be required for the disulfide-bond formation between CysA and CysB. The specific involvement of the remaining proteins from the cluster is more difficult to discern, but could have broader regulatory (FGSG_00040 and FGSG_11657) or enzymatic functions (FGSG_00044 and FGSG_00045). The final C-domain of GRA1 does not possess the expected sequence of a termination CT domain, often implicated in macrocyclization and release of a cyclopeptidein fungal NRPs; and the thioesterase FGSG_00047 may act in concert with the terminal C-domain of GRA1 to catalyze the formation of the macrocyclic anhydride and release of the products. This chain is Gramillins biosynthetic cluster protein FGSG_11657, found in Gibberella zeae (strain ATCC MYA-4620 / CBS 123657 / FGSC 9075 / NRRL 31084 / PH-1) (Wheat head blight fungus).